Reading from the N-terminus, the 75-residue chain is UPF0346 protein LEUM_0763 (75 aa).

Belongs to the UPF0346 family.

This is UPF0346 protein LEUM_0763 from Leuconostoc mesenteroides subsp. mesenteroides (strain ATCC 8293 / DSM 20343 / BCRC 11652 / CCM 1803 / JCM 6124 / NCDO 523 / NBRC 100496 / NCIMB 8023 / NCTC 12954 / NRRL B-1118 / 37Y).